A 420-amino-acid polypeptide reads, in one-letter code: L-rhamnose isomerase (420 aa).

The Mn(2+) site is built by histidine 264, aspartate 296, and aspartate 298.

This sequence belongs to the rhamnose isomerase family. Requires Mn(2+) as cofactor.

Its subcellular location is the cytoplasm. It carries out the reaction L-rhamnopyranose = L-rhamnulose. Its pathway is carbohydrate degradation; L-rhamnose degradation; glycerone phosphate from L-rhamnose: step 1/3. Its function is as follows. Catalyzes the interconversion of L-rhamnose and L-rhamnulose. This chain is L-rhamnose isomerase, found in Listeria monocytogenes serovar 1/2a (strain ATCC BAA-679 / EGD-e).